The following is a 293-amino-acid chain: Formamidopyrimidine-DNA glycosylase (293 aa).

The active-site Schiff-base intermediate with DNA is Pro-2. Glu-3 (proton donor) is an active-site residue. Lys-58 acts as the Proton donor; for beta-elimination activity in catalysis. DNA-binding residues include His-104, Arg-127, and Arg-170. An FPG-type zinc finger spans residues 257–293; sequence SVYGREGKPCRNPACGGTVERVVQSGRSTFFCASCQT. Arg-283 (proton donor; for delta-elimination activity) is an active-site residue.

Belongs to the FPG family. As to quaternary structure, monomer. It depends on Zn(2+) as a cofactor.

The catalysed reaction is Hydrolysis of DNA containing ring-opened 7-methylguanine residues, releasing 2,6-diamino-4-hydroxy-5-(N-methyl)formamidopyrimidine.. It catalyses the reaction 2'-deoxyribonucleotide-(2'-deoxyribose 5'-phosphate)-2'-deoxyribonucleotide-DNA = a 3'-end 2'-deoxyribonucleotide-(2,3-dehydro-2,3-deoxyribose 5'-phosphate)-DNA + a 5'-end 5'-phospho-2'-deoxyribonucleoside-DNA + H(+). Involved in base excision repair of DNA damaged by oxidation or by mutagenic agents. Acts as a DNA glycosylase that recognizes and removes damaged bases. Has a preference for oxidized purines, such as 7,8-dihydro-8-oxoguanine (8-oxoG). Has AP (apurinic/apyrimidinic) lyase activity and introduces nicks in the DNA strand. Cleaves the DNA backbone by beta-delta elimination to generate a single-strand break at the site of the removed base with both 3'- and 5'-phosphates. The sequence is that of Formamidopyrimidine-DNA glycosylase from Brucella canis (strain ATCC 23365 / NCTC 10854 / RM-666).